A 255-amino-acid polypeptide reads, in one-letter code: Proteasome subunit alpha 2 (255 aa).

Residues 229-255 form a disordered region; that stretch reads AGSSLEEMLPTPAATEDAPPANGDAPS. A compositionally biased stretch (low complexity) spans 238–249; the sequence is PTPAATEDAPPA.

It belongs to the peptidase T1A family. In terms of assembly, the 20S proteasome core is composed of 14 alpha and 14 beta subunits that assemble into four stacked heptameric rings, resulting in a barrel-shaped structure. The two inner rings, each composed of seven catalytic beta subunits, are sandwiched by two outer rings, each composed of seven alpha subunits. All four combinations of alpha- and beta-subunits (beta2-alpha1, beta2-alpha2, beta1-alpha2 and beta1-alpha1) yield fully assembled and proteolytically active proteasomes. The catalytic chamber with the active sites is on the inside of the barrel. Has probably a gated structure, the ends of the cylinder being occluded by the N-termini of the alpha-subunits. Is likely capped by the proteasome-associated ATPase, ARC. In terms of processing, the N-terminus is blocked.

It localises to the cytoplasm. The protein operates within protein degradation; proteasomal Pup-dependent pathway. Its activity is regulated as follows. The formation of the proteasomal ATPase ARC-20S proteasome complex, likely via the docking of the C-termini of ARC into the intersubunit pockets in the alpha-rings, may trigger opening of the gate for substrate entry. Interconversion between the open-gate and close-gate conformations leads to a dynamic regulation of the 20S proteasome proteolysis activity. Functionally, component of the proteasome core, a large protease complex with broad specificity involved in protein degradation. The R.erythropolis proteasomes are able to cleave oligopeptides after Tyr, Phe and Leu, very poorly after Arg but not after Glu. Thus, displays chymotrypsin-like activity, low trypsin-like activity but no caspase-like activity. In Rhodococcus erythropolis (Arthrobacter picolinophilus), this protein is Proteasome subunit alpha 2.